The chain runs to 153 residues: Superoxide dismutase [Cu-Zn] (153 aa).

3 residues coordinate Cu cation: His45, His47, and His62. Cys56 and Cys145 are joined by a disulfide. Zn(2+)-binding residues include His62, His70, His79, and Asp82. His119 serves as a coordination point for Cu cation.

It belongs to the Cu-Zn superoxide dismutase family. As to quaternary structure, homodimer. The cofactor is Cu cation. Zn(2+) serves as cofactor.

Its subcellular location is the cytoplasm. It catalyses the reaction 2 superoxide + 2 H(+) = H2O2 + O2. Functionally, destroys radicals which are normally produced within the cells and which are toxic to biological systems. The protein is Superoxide dismutase [Cu-Zn] of Drosophila teissieri (Fruit fly).